The following is a 3373-amino-acid chain: Intermembrane lipid transfer protein vps13A (3373 aa).

The Chorein N-terminal domain maps to 3 to 119 (FEGLVSDVLS…QAELKKKKLE (117 aa)). Disordered regions lie at residues 818-858 (PKAT…VNSS), 1028-1096 (VPIN…KTAS), 1259-1304 (NNNK…DLEK), 1648-1729 (DPSI…EEEK), and 1872-1913 (QKKR…GKKD). A compositionally biased stretch (polar residues) spans 823–839 (TPINDSNSPSSVSPKLI). Composition is skewed to low complexity over residues 840–858 (STSP…VNSS) and 1048–1066 (SSPN…QSPQ). Basic and acidic residues-rich tracts occupy residues 1263–1274 (SIEKSKSIDSKL) and 1288–1304 (RSDD…DLEK). 3 stretches are compositionally biased toward low complexity: residues 1659-1685 (QQQQ…RSQS), 1695-1716 (SSIG…SLSS), and 1884-1898 (SSST…STNS). Residues 1899–1909 (FQTSTSGNSNS) show a composition bias toward polar residues. Residues 2405-2706 (TLSFYCQYWL…CYGWDEPSAE (302 aa)) form the SHR-BD domain. The disordered stretch occupies residues 2909-2933 (RGNNASNNNNNNGMTSSQMRQSGSG). The span at 2911–2920 (NNASNNNNNN) shows a compositional bias: low complexity.

The protein belongs to the VPS13 family.

The protein resides in the membrane. In terms of biological role, mediates the transfer of lipids between membranes at organelle contact sites. In Dictyostelium discoideum (Social amoeba), this protein is Intermembrane lipid transfer protein vps13A (vps13A).